Here is a 425-residue protein sequence, read N- to C-terminus: Threonylcarbamoyladenosine tRNA methylthiotransferase (425 aa).

Residues arginine 60–arginine 295 form the Radical SAM core domain. Cysteine 74, cysteine 78, and cysteine 81 together coordinate [4Fe-4S] cluster. A TRAM domain is found at aspartate 293–serine 355. The helical transmembrane segment at proline 362–tyrosine 382 threads the bilayer.

Belongs to the methylthiotransferase family. CDKAL1 subfamily. [4Fe-4S] cluster serves as cofactor.

It localises to the membrane. It catalyses the reaction N(6)-L-threonylcarbamoyladenosine(37) in tRNA + (sulfur carrier)-SH + AH2 + 2 S-adenosyl-L-methionine = 2-methylsulfanyl-N(6)-L-threonylcarbamoyladenosine(37) in tRNA + (sulfur carrier)-H + 5'-deoxyadenosine + L-methionine + A + S-adenosyl-L-homocysteine + 2 H(+). Catalyzes the methylthiolation of N6-threonylcarbamoyladenosine (t(6)A), leading to the formation of 2-methylthio-N6-threonylcarbamoyladenosine (ms(2)t(6)A) at position 37 in tRNAs that read codons beginning with adenine. This Caenorhabditis elegans protein is Threonylcarbamoyladenosine tRNA methylthiotransferase.